A 655-amino-acid chain; its full sequence is uncharacterized protein (655 aa).

Residues 5–25 (IIIIIFIVINFINIIISSITF) form a helical membrane-spanning segment. 2 disordered regions span residues 337 to 363 (NSDY…NNNN) and 484 to 525 (DKIG…SDNS). Over residues 515–524 (DNNSIGSSDN) the composition is skewed to low complexity. A helical membrane pass occupies residues 588-608 (ILAVTISAIGIICVALLLTVV).

Its subcellular location is the membrane. This is an uncharacterized protein from Dictyostelium discoideum (Social amoeba).